Reading from the N-terminus, the 172-residue chain is Envelope protein UL45 (172 aa).

Topologically, residues 1–27 (MPLRASEHAYRPLGPGTPPVRARLPAA) are intravirion. A helical; Signal-anchor for type II membrane protein membrane pass occupies residues 28 to 48 (AWVGVGTIIGGVVIIAALVLV). Topologically, residues 49-172 (PSRASWALSP…TSTRNALGLP (124 aa)) are virion surface.

It belongs to the herpesviridae HHV-1 UL45 family.

It is found in the virion membrane. Important virulence factor of HSV neurotropism. Seems to be required for glycoprotein B-induced fusion. Dispensable for growth in vitro. This Homo sapiens (Human) protein is Envelope protein UL45.